The following is a 264-amino-acid chain: 3-methyl-2-oxobutanoate hydroxymethyltransferase (264 aa).

Residues aspartate 45 and aspartate 84 each contribute to the Mg(2+) site. Residues 45–46 (DS), aspartate 84, and lysine 112 contribute to the 3-methyl-2-oxobutanoate site. Residue glutamate 114 coordinates Mg(2+). The active-site Proton acceptor is the glutamate 181.

This sequence belongs to the PanB family. In terms of assembly, homodecamer; pentamer of dimers. Requires Mg(2+) as cofactor.

The protein localises to the cytoplasm. The enzyme catalyses 3-methyl-2-oxobutanoate + (6R)-5,10-methylene-5,6,7,8-tetrahydrofolate + H2O = 2-dehydropantoate + (6S)-5,6,7,8-tetrahydrofolate. Its pathway is cofactor biosynthesis; (R)-pantothenate biosynthesis; (R)-pantoate from 3-methyl-2-oxobutanoate: step 1/2. Catalyzes the reversible reaction in which hydroxymethyl group from 5,10-methylenetetrahydrofolate is transferred onto alpha-ketoisovalerate to form ketopantoate. This is 3-methyl-2-oxobutanoate hydroxymethyltransferase from Shigella flexneri serotype 5b (strain 8401).